The sequence spans 91 residues: UPF0358 protein SAS1047 (91 aa).

This sequence belongs to the UPF0358 family.

The sequence is that of UPF0358 protein SAS1047 from Staphylococcus aureus (strain MSSA476).